Here is a 242-residue protein sequence, read N- to C-terminus: Glucosamine-6-phosphate deaminase (242 aa).

Catalysis depends on D67, which acts as the Proton acceptor; for enolization step. N136 functions as the For ring-opening step in the catalytic mechanism. Residue H138 is the Proton acceptor; for ring-opening step of the active site. E143 functions as the For ring-opening step in the catalytic mechanism.

It belongs to the glucosamine/galactosamine-6-phosphate isomerase family. NagB subfamily.

The catalysed reaction is alpha-D-glucosamine 6-phosphate + H2O = beta-D-fructose 6-phosphate + NH4(+). Its pathway is amino-sugar metabolism; N-acetylneuraminate degradation; D-fructose 6-phosphate from N-acetylneuraminate: step 5/5. In terms of biological role, catalyzes the reversible isomerization-deamination of glucosamine 6-phosphate (GlcN6P) to form fructose 6-phosphate (Fru6P) and ammonium ion. The protein is Glucosamine-6-phosphate deaminase of Clostridium perfringens (strain 13 / Type A).